Here is a 453-residue protein sequence, read N- to C-terminus: Tubulin alpha chain (453 aa).

Gln11 is a GTP binding site. Lys40 carries the post-translational modification N6-acetyllysine. GTP is bound by residues Glu71, Gly144, Thr145, Thr179, Asn206, and Asn228. Glu71 lines the Mg(2+) pocket. The active site involves Glu254.

This sequence belongs to the tubulin family. Dimer of alpha and beta chains. A typical microtubule is a hollow water-filled tube with an outer diameter of 25 nm and an inner diameter of 15 nM. Alpha-beta heterodimers associate head-to-tail to form protofilaments running lengthwise along the microtubule wall with the beta-tubulin subunit facing the microtubule plus end conferring a structural polarity. Microtubules usually have 13 protofilaments but different protofilament numbers can be found in some organisms and specialized cells. Mg(2+) is required as a cofactor. In terms of processing, undergoes a tyrosination/detyrosination cycle, the cyclic removal and re-addition of a C-terminal tyrosine residue by the enzymes tubulin tyrosine carboxypeptidase (TTCP) and tubulin tyrosine ligase (TTL), respectively. Post-translationally, acetylation of alpha chains at Lys-40 stabilizes microtubules and affects affinity and processivity of microtubule motors. This modification has a role in multiple cellular functions, ranging from cell motility, cell cycle progression or cell differentiation to intracellular trafficking and signaling.

It is found in the cytoplasm. The protein localises to the cytoskeleton. It carries out the reaction GTP + H2O = GDP + phosphate + H(+). In terms of biological role, tubulin is the major constituent of microtubules, a cylinder consisting of laterally associated linear protofilaments composed of alpha- and beta-tubulin heterodimers. Microtubules grow by the addition of GTP-tubulin dimers to the microtubule end, where a stabilizing cap forms. Below the cap, tubulin dimers are in GDP-bound state, owing to GTPase activity of alpha-tubulin. This Plasmodium falciparum (isolate K1 / Thailand) protein is Tubulin alpha chain.